A 277-amino-acid chain; its full sequence is Urease accessory protein UreD (277 aa).

The protein belongs to the UreD family. UreD, UreF and UreG form a complex that acts as a GTP-hydrolysis-dependent molecular chaperone, activating the urease apoprotein by helping to assemble the nickel containing metallocenter of UreC. The UreE protein probably delivers the nickel.

The protein localises to the cytoplasm. Functionally, required for maturation of urease via the functional incorporation of the urease nickel metallocenter. The chain is Urease accessory protein UreD from Flavobacterium johnsoniae (strain ATCC 17061 / DSM 2064 / JCM 8514 / BCRC 14874 / CCUG 350202 / NBRC 14942 / NCIMB 11054 / UW101) (Cytophaga johnsonae).